Reading from the N-terminus, the 684-residue chain is DNA-directed RNA polymerase subunit beta' (684 aa).

Zn(2+) is bound by residues C69, C71, C87, and C90. Mg(2+) contacts are provided by D491, D493, and D495.

Belongs to the RNA polymerase beta' chain family. RpoC1 subfamily. In plastids the minimal PEP RNA polymerase catalytic core is composed of four subunits: alpha, beta, beta', and beta''. When a (nuclear-encoded) sigma factor is associated with the core the holoenzyme is formed, which can initiate transcription. It depends on Mg(2+) as a cofactor. Zn(2+) is required as a cofactor.

The protein resides in the plastid. The protein localises to the chloroplast. It catalyses the reaction RNA(n) + a ribonucleoside 5'-triphosphate = RNA(n+1) + diphosphate. In terms of biological role, DNA-dependent RNA polymerase catalyzes the transcription of DNA into RNA using the four ribonucleoside triphosphates as substrates. This is DNA-directed RNA polymerase subunit beta' from Phaseolus vulgaris (Kidney bean).